Here is a 115-residue protein sequence, read N- to C-terminus: Vitelline membrane protein Vm32E (115 aa).

Positions 1 to 17 are cleaved as a signal peptide; the sequence is MKIVAFTLVAFVALAGA. Residues 35-72 enclose the VM domain; sequence GYPAPPCPTNYLFSCQPNLAPAPCAQEAPAYGSAGAYT.

Belongs to the vitelline membrane family.

The protein localises to the secreted. Its function is as follows. Major early eggshell protein. This is Vitelline membrane protein Vm32E from Drosophila yakuba (Fruit fly).